Here is a 196-residue protein sequence, read N- to C-terminus: 3-isopropylmalate dehydratase small subunit (196 aa).

It belongs to the LeuD family. LeuD type 1 subfamily. As to quaternary structure, heterodimer of LeuC and LeuD.

The enzyme catalyses (2R,3S)-3-isopropylmalate = (2S)-2-isopropylmalate. It participates in amino-acid biosynthesis; L-leucine biosynthesis; L-leucine from 3-methyl-2-oxobutanoate: step 2/4. In terms of biological role, catalyzes the isomerization between 2-isopropylmalate and 3-isopropylmalate, via the formation of 2-isopropylmaleate. In Streptococcus gordonii (strain Challis / ATCC 35105 / BCRC 15272 / CH1 / DL1 / V288), this protein is 3-isopropylmalate dehydratase small subunit.